Consider the following 481-residue polypeptide: tRNA-2-methylthio-N(6)-dimethylallyladenosine synthase (481 aa).

One can recognise an MTTase N-terminal domain in the interval 24–140 (KKLFIESYGC…LPNLLNEVEE (117 aa)). Positions 33, 69, 103, 178, 182, and 185 each coordinate [4Fe-4S] cluster. Residues 164-411 (MSNGITALVA…DLQQKHAWWR (248 aa)) enclose the Radical SAM core domain. The region spanning 413-476 (EDFIGQTVEV…SGTLKGEAVG (64 aa)) is the TRAM domain.

Belongs to the methylthiotransferase family. MiaB subfamily. Monomer. [4Fe-4S] cluster is required as a cofactor.

The protein localises to the cytoplasm. It catalyses the reaction N(6)-dimethylallyladenosine(37) in tRNA + (sulfur carrier)-SH + AH2 + 2 S-adenosyl-L-methionine = 2-methylsulfanyl-N(6)-dimethylallyladenosine(37) in tRNA + (sulfur carrier)-H + 5'-deoxyadenosine + L-methionine + A + S-adenosyl-L-homocysteine + 2 H(+). Functionally, catalyzes the methylthiolation of N6-(dimethylallyl)adenosine (i(6)A), leading to the formation of 2-methylthio-N6-(dimethylallyl)adenosine (ms(2)i(6)A) at position 37 in tRNAs that read codons beginning with uridine. The polypeptide is tRNA-2-methylthio-N(6)-dimethylallyladenosine synthase (Flavobacterium psychrophilum (strain ATCC 49511 / DSM 21280 / CIP 103535 / JIP02/86)).